A 110-amino-acid polypeptide reads, in one-letter code: Large ribosomal subunit protein uL22 (110 aa).

The protein belongs to the universal ribosomal protein uL22 family. As to quaternary structure, part of the 50S ribosomal subunit.

Functionally, this protein binds specifically to 23S rRNA; its binding is stimulated by other ribosomal proteins, e.g. L4, L17, and L20. It is important during the early stages of 50S assembly. It makes multiple contacts with different domains of the 23S rRNA in the assembled 50S subunit and ribosome. Its function is as follows. The globular domain of the protein is located near the polypeptide exit tunnel on the outside of the subunit, while an extended beta-hairpin is found that lines the wall of the exit tunnel in the center of the 70S ribosome. This chain is Large ribosomal subunit protein uL22, found in Leptospira interrogans serogroup Icterohaemorrhagiae serovar copenhageni (strain Fiocruz L1-130).